Consider the following 204-residue polypeptide: Thymidylate kinase (204 aa).

7 to 14 lines the ATP pocket; it reads GGEGVGKT.

It belongs to the thymidylate kinase family.

The catalysed reaction is dTMP + ATP = dTDP + ADP. Functionally, phosphorylation of dTMP to form dTDP in both de novo and salvage pathways of dTTP synthesis. This chain is Thymidylate kinase, found in Synechococcus sp. (strain JA-3-3Ab) (Cyanobacteria bacterium Yellowstone A-Prime).